Consider the following 38-residue polypeptide: Large ribosomal subunit protein bL36 (38 aa).

It belongs to the bacterial ribosomal protein bL36 family.

This Azotobacter vinelandii (strain DJ / ATCC BAA-1303) protein is Large ribosomal subunit protein bL36.